A 194-amino-acid polypeptide reads, in one-letter code: RNA polymerase II subunit A C-terminal domain phosphatase SSU72 like protein 2 (194 aa).

It belongs to the SSU72 phosphatase family.

It localises to the nucleus. The enzyme catalyses O-phospho-L-seryl-[protein] + H2O = L-seryl-[protein] + phosphate. It catalyses the reaction O-phospho-L-threonyl-[protein] + H2O = L-threonyl-[protein] + phosphate. Protein phosphatase that catalyzes the dephosphorylation of the C-terminal domain of RNA polymerase II. Plays a role in RNA processing and termination. This Homo sapiens (Human) protein is RNA polymerase II subunit A C-terminal domain phosphatase SSU72 like protein 2.